A 762-amino-acid chain; its full sequence is 5-methyltetrahydropteroyltriglutamate--homocysteine methyltransferase (762 aa).

Residues 17–20 (REWK) and Lys-111 each bind 5-methyltetrahydropteroyltri-L-glutamate. L-homocysteine-binding positions include 435-437 (IGS) and Glu-488. L-methionine contacts are provided by residues 435 to 437 (IGS) and Glu-488. Residues 519 to 520 (RC) and Trp-565 contribute to the 5-methyltetrahydropteroyltri-L-glutamate site. An L-homocysteine-binding site is contributed by Asp-603. Asp-603 is a binding site for L-methionine. Glu-609 lines the 5-methyltetrahydropteroyltri-L-glutamate pocket. Zn(2+)-binding residues include His-645, Cys-647, and Glu-669. His-698 (proton donor) is an active-site residue. Position 730 (Cys-730) interacts with Zn(2+).

This sequence belongs to the vitamin-B12 independent methionine synthase family. Requires Zn(2+) as cofactor.

The enzyme catalyses 5-methyltetrahydropteroyltri-L-glutamate + L-homocysteine = tetrahydropteroyltri-L-glutamate + L-methionine. It functions in the pathway amino-acid biosynthesis; L-methionine biosynthesis via de novo pathway; L-methionine from L-homocysteine (MetE route): step 1/1. Functionally, catalyzes the transfer of a methyl group from 5-methyltetrahydrofolate to homocysteine resulting in methionine formation. This is 5-methyltetrahydropteroyltriglutamate--homocysteine methyltransferase from Bacillus cereus (strain ATCC 14579 / DSM 31 / CCUG 7414 / JCM 2152 / NBRC 15305 / NCIMB 9373 / NCTC 2599 / NRRL B-3711).